Reading from the N-terminus, the 170-residue chain is Sec-independent protein translocase protein TATA, chloroplastic (170 aa).

The transit peptide at 1–61 directs the protein to the chloroplast; sequence MGIPVVVPVA…GGSGGDLAAV (61 aa). At 62 to 84 the chain is on the lumenal side; the sequence is AASVAARPRRAGSGGGGALGCKC. Residues 85–105 form a helical membrane-spanning segment; the sequence is LFGLGVPELAVIAGVAALVFG. Over 106–170 the chain is Stromal; the sequence is PKQLPEIGRS…LEASSSKESA (65 aa). Over residues 130–139 the composition is skewed to basic and acidic residues; sequence FETELKKEPG. The tract at residues 130 to 170 is disordered; it reads FETELKKEPGEGGDQPPPATPTAVSGGEEKGLEASSSKESA.

The protein belongs to the TatA/E family. In terms of assembly, in thylakoid membranes, TATC and TATB form a large receptor complex, containing about eight TATC-TATB pairs, which binds the precursor protein. Twin arginine signal peptide promotes pH-triggered docking of TATA oligomers to TATC-TATB receptor complex, inducing a conformational switch of TATA that results in activation of the translocase. TATA dissociates from TATC-TATB upon completion of translocation.

It is found in the plastid. The protein resides in the chloroplast thylakoid membrane. Its function is as follows. Part of the twin-arginine translocation (Tat) system that transports large folded proteins containing a characteristic twin-arginine motif in their signal peptide across the thylakoid membrane. Involved in delta pH-dependent protein transport required for chloroplast development, especially thylakoid membrane formation. TATC and TATB mediate precursor recognition, whereas TATA facilitates translocation. This Zea mays (Maize) protein is Sec-independent protein translocase protein TATA, chloroplastic.